Reading from the N-terminus, the 330-residue chain is Alpha/beta hydrolase domain-containing protein VTE7 (330 aa).

The region spanning 84 to 315 (VVLLHCFDSS…GHLPHVENPK (232 aa)) is the AB hydrolase-1 domain. The Nucleophile role is filled by S157. Catalysis depends on charge relay system residues D279 and H307.

Belongs to the AB hydrolase superfamily.

Its subcellular location is the plastid. It is found in the chloroplast envelope. Its function is as follows. Hydrolase involved in tocopherol (vitamin E) biosynthesis. Releases prenyl alcohols from chlorophyll biosynthetic intermediates, which are then converted to the corresponding diphosphates for tocopherol biosynthesis. Provides most of the phytol from chlorophyll for tocopherol biosynthesis in seeds. In Arabidopsis thaliana (Mouse-ear cress), this protein is Alpha/beta hydrolase domain-containing protein VTE7.